Consider the following 907-residue polypeptide: Translation initiation factor IF-2 (907 aa).

The tract at residues Asp26–Asp317 is disordered. Composition is skewed to basic and acidic residues over residues Gly28–Lys44 and Ser101–Tyr248. The span at Lys299–Lys308 shows a compositional bias: basic residues. One can recognise a tr-type G domain in the interval Pro406–Thr575. Residues Gly415 to Thr422 are G1. Gly415 to Thr422 is a GTP binding site. The G2 stretch occupies residues Gly440–His444. Positions Asp461 to Gly464 are G3. GTP contacts are provided by residues Asp461–His465 and Asn515–Asp518. The tract at residues Asn515 to Asp518 is G4. The segment at Ser551–Lys553 is G5.

Belongs to the TRAFAC class translation factor GTPase superfamily. Classic translation factor GTPase family. IF-2 subfamily.

The protein localises to the cytoplasm. One of the essential components for the initiation of protein synthesis. Protects formylmethionyl-tRNA from spontaneous hydrolysis and promotes its binding to the 30S ribosomal subunits. Also involved in the hydrolysis of GTP during the formation of the 70S ribosomal complex. In Vibrio vulnificus (strain CMCP6), this protein is Translation initiation factor IF-2.